A 540-amino-acid chain; its full sequence is ADP,ATP carrier protein 2 (540 aa).

Helical transmembrane passes span 23 to 43, 61 to 81, 93 to 113, 150 to 170, 185 to 205, 222 to 242, 292 to 312, 334 to 354, 361 to 381, 389 to 409, 455 to 475, and 477 to 497; these read FSKFIPLFFLAFFVGVNYALL, VIPFLKVWGIVPGAVIVTMIY, VFISLVGGFLGFFALFATVIY, LYYVMSELWSSIVLSTLFWGV, ALINTGLNLSSVFAGEVSLWL, EVLLNITLLIVLAGGVILYLY, LLGIAVVVLSYNLVIHLFEVV, ITTLTGIVSALTGIFAAGQTI, IGALVPPLTMLITGALFFGAI, MIFGGILGISPLVLTAWLGGV, SGGSLVYQGLLIIFSSVAASL, and AITIVLLLALGSWIFVIAWLG.

Belongs to the ADP/ATP translocase tlc family.

The protein localises to the cell membrane. This is ADP,ATP carrier protein 2 (tlcB) from Chlamydia trachomatis serovar D (strain ATCC VR-885 / DSM 19411 / UW-3/Cx).